Consider the following 398-residue polypeptide: Acetate kinase (398 aa).

N10 contributes to the Mg(2+) binding site. K17 is a binding site for ATP. Substrate is bound at residue R89. The active-site Proton donor/acceptor is D148. ATP contacts are provided by residues 208–212 (HLGNG), 283–285 (DCR), and 331–335 (GIGEN). Residue E385 participates in Mg(2+) binding.

The protein belongs to the acetokinase family. Homodimer. It depends on Mg(2+) as a cofactor. The cofactor is Mn(2+).

It localises to the cytoplasm. It carries out the reaction acetate + ATP = acetyl phosphate + ADP. It participates in metabolic intermediate biosynthesis; acetyl-CoA biosynthesis; acetyl-CoA from acetate: step 1/2. In terms of biological role, catalyzes the formation of acetyl phosphate from acetate and ATP. Can also catalyze the reverse reaction. This Histophilus somni (strain 2336) (Haemophilus somnus) protein is Acetate kinase.